The chain runs to 165 residues: Shikimate kinase (165 aa).

11 to 16 (GAGKTT) provides a ligand contact to ATP. A Mg(2+)-binding site is contributed by T15. Positions 33, 57, and 78 each coordinate substrate. An ATP-binding site is contributed by R116. R134 provides a ligand contact to substrate.

Belongs to the shikimate kinase family. Monomer. It depends on Mg(2+) as a cofactor.

Its subcellular location is the cytoplasm. The catalysed reaction is shikimate + ATP = 3-phosphoshikimate + ADP + H(+). It functions in the pathway metabolic intermediate biosynthesis; chorismate biosynthesis; chorismate from D-erythrose 4-phosphate and phosphoenolpyruvate: step 5/7. Its function is as follows. Catalyzes the specific phosphorylation of the 3-hydroxyl group of shikimic acid using ATP as a cosubstrate. In Bacillus cytotoxicus (strain DSM 22905 / CIP 110041 / 391-98 / NVH 391-98), this protein is Shikimate kinase.